Reading from the N-terminus, the 578-residue chain is Protein BONZAI 1 (578 aa).

A lipid anchor (N-myristoyl glycine) is attached at Gly-2. C2 domains follow at residues 26-163 (ALGA…TSTL) and 176-303 (QPHH…NFSL). 4 residues coordinate Ca(2+): Asp-63, Asp-69, Asp-122, and Asp-124. Residues 341–560 (NFMVAIDFTA…SVVQALLAEL (220 aa)) enclose the VWFA domain.

This sequence belongs to the copine family. In terms of assembly, interacts (via VWA domain) with BAP1 and BAP2. Interacts with HSP70-1 and HSP70-2. It depends on Ca(2+) as a cofactor. Based on mass spectrometry analysis, the N-peptide must be modified and there might be additional modifications other than myristoylation. In terms of tissue distribution, expressed in roots and flowers and, at higher levels, in leaves and stems. Strongly expressed in growing tissues. Not detected in green siliques.

It localises to the cell membrane. Its function is as follows. Negative regulator of cell death and defense responses. Negative regulator of several R genes, including SNC1. May have effects in promoting growth and development. May function in membrane trafficking and in fusion of vesicles with plasma membrane at low temperature. Exhibits calcium-dependent phospholipid binding properties. This chain is Protein BONZAI 1 (BON1), found in Arabidopsis thaliana (Mouse-ear cress).